Consider the following 365-residue polypeptide: DNA replication and repair protein RecF (365 aa).

30 to 37 (GQNGSGKT) serves as a coordination point for ATP.

Belongs to the RecF family.

The protein localises to the cytoplasm. In terms of biological role, the RecF protein is involved in DNA metabolism; it is required for DNA replication and normal SOS inducibility. RecF binds preferentially to single-stranded, linear DNA. It also seems to bind ATP. The chain is DNA replication and repair protein RecF from Shewanella woodyi (strain ATCC 51908 / MS32).